The sequence spans 217 residues: N-(5'-phosphoribosyl)anthranilate isomerase (217 aa).

It belongs to the TrpF family.

It carries out the reaction N-(5-phospho-beta-D-ribosyl)anthranilate = 1-(2-carboxyphenylamino)-1-deoxy-D-ribulose 5-phosphate. The protein operates within amino-acid biosynthesis; L-tryptophan biosynthesis; L-tryptophan from chorismate: step 3/5. This chain is N-(5'-phosphoribosyl)anthranilate isomerase, found in Bacillus velezensis (strain DSM 23117 / BGSC 10A6 / LMG 26770 / FZB42) (Bacillus amyloliquefaciens subsp. plantarum).